Reading from the N-terminus, the 110-residue chain is MNKNNVIDSLFNIIEDRKDKPIEGSYTGYLFEKGLDKILKKVGEESSEVIIAAKNEDEEELIKEICDLTYHIMVLMVEKQIKLDGIEKELEKRREKICNKKNERKTIEKL.

Belongs to the PRA-PH family.

It localises to the cytoplasm. It carries out the reaction 1-(5-phospho-beta-D-ribosyl)-ATP + H2O = 1-(5-phospho-beta-D-ribosyl)-5'-AMP + diphosphate + H(+). It functions in the pathway amino-acid biosynthesis; L-histidine biosynthesis; L-histidine from 5-phospho-alpha-D-ribose 1-diphosphate: step 2/9. The polypeptide is Phosphoribosyl-ATP pyrophosphatase (Clostridium botulinum (strain Kyoto / Type A2)).